The chain runs to 72 residues: Toxin Acra II-1 (72 aa).

One can recognise an LCN-type CS-alpha/beta domain in the interval valine 3–lysine 67. Cystine bridges form between cysteine 18/cysteine 41, cysteine 27/cysteine 46, and cysteine 31/cysteine 48.

Belongs to the long (3 C-C) scorpion toxin superfamily. Sodium channel inhibitor family. Beta subfamily. As to expression, expressed by the venom gland.

The protein resides in the secreted. Functionally, binds to sodium channels (Nav) and affects the channel activation process. This is Toxin Acra II-1 from Androctonus crassicauda (Arabian fat-tailed scorpion).